The sequence spans 730 residues: Dual function macrocyclase-peptidase POPB (730 aa).

The tract at residues 1–34 is disordered; that stretch reads MSSVTWAPGNYPSTRRSDHVDTYQSASKGEVPVP. Catalysis depends on charge relay system residues S577, D661, and H698.

Belongs to the peptidase S9A family. As to quaternary structure, monomer.

The enzyme catalyses Hydrolysis of Pro-|-Xaa &gt;&gt; Ala-|-Xaa in oligopeptides.. In terms of biological role, dual function macrocyclase-peptidase involved in the biosynthesis of the highly toxic amanitin toxin family of macrocycles. Cleaves peptide bonds on the C-terminal side of prolyl residues. The enzyme first removes 10 residues from the N-terminus of a 35-residue substrate. Conformational trapping of the 25 amino-acid peptide forces the enzyme to release this intermediate rather than proceed to macrocyclization. The enzyme rebinds the 25 amino-acid peptide in a different conformation and catalyzes macrocyclization of the N-terminal eight residues. This Galerina marginata (strain CBS 339.88) protein is Dual function macrocyclase-peptidase POPB.